We begin with the raw amino-acid sequence, 134 residues long: Small ribosomal subunit protein uS8 (134 aa).

Belongs to the universal ribosomal protein uS8 family. Part of the 30S ribosomal subunit. Contacts proteins S5 and S12.

One of the primary rRNA binding proteins, it binds directly to 16S rRNA central domain where it helps coordinate assembly of the platform of the 30S subunit. The protein is Small ribosomal subunit protein uS8 of Thermotoga neapolitana (strain ATCC 49049 / DSM 4359 / NBRC 107923 / NS-E).